A 115-amino-acid chain; its full sequence is MDIIKKIERENMRLDVPAFRSGDTVKVHLRIVEGEKQRIQIFQGNVIRVKRGTTCATFTVRKISDGVGVERIFPLNSPFIDRVEVVTQGRVRRSRLYYLRALKGKAARIKPRGRF.

Belongs to the bacterial ribosomal protein bL19 family.

This protein is located at the 30S-50S ribosomal subunit interface and may play a role in the structure and function of the aminoacyl-tRNA binding site. This is Large ribosomal subunit protein bL19 from Desulfovibrio desulfuricans (strain ATCC 27774 / DSM 6949 / MB).